The sequence spans 124 residues: SVVKSEDYARPSYVDRRDYPLPDVAHVRHLSASQKALKEKEKASWSSLSMDEKVEKTVVGAAMFFIGFTAILVILEKRYVYGPLPHTFDKEWVAMQTKRMLDLKMNPIDGLASKWDYEKKEWKK.

K4 carries the N6-acetyllysine; alternate modification. K4 bears the N6-succinyllysine; alternate mark. Phosphoserine occurs at positions 31 and 33. K35 carries the N6-acetyllysine; alternate modification. N6-succinyllysine; alternate is present on K35. At K42 the chain carries N6-acetyllysine.

It belongs to the cytochrome c oxidase IV family. In terms of assembly, component of the cytochrome c oxidase (complex IV, CIV), a multisubunit enzyme composed of 14 subunits. The complex is composed of a catalytic core of 3 subunits MT-CO1, MT-CO2 and MT-CO3, encoded in the mitochondrial DNA, and 11 supernumerary subunits COX4I, COX5A, COX5B, COX6A, COX6B, COX6C, COX7A, COX7B, COX7C, COX8 and NDUFA4, which are encoded in the nuclear genome. The complex exists as a monomer or a dimer and forms supercomplexes (SCs) in the inner mitochondrial membrane with NADH-ubiquinone oxidoreductase (complex I, CI) and ubiquinol-cytochrome c oxidoreductase (cytochrome b-c1 complex, complex III, CIII), resulting in different assemblies (supercomplex SCI(1)III(2)IV(1) and megacomplex MCI(2)III(2)IV(2)). Interacts with PHB2; the interaction decreases in absence of SPHK2. Interacts with AFG1L. Interacts with ABCB7; this interaction allows the regulation of cellular iron homeostasis and cellular reactive oxygen species (ROS) levels in cardiomyocytes. Interacts with FLVCR2; this interaction occurs in the absence of heme and is disrupted upon heme binding. Interacts with IRGC.

It localises to the mitochondrion inner membrane. It participates in energy metabolism; oxidative phosphorylation. Functionally, component of the cytochrome c oxidase, the last enzyme in the mitochondrial electron transport chain which drives oxidative phosphorylation. The respiratory chain contains 3 multisubunit complexes succinate dehydrogenase (complex II, CII), ubiquinol-cytochrome c oxidoreductase (cytochrome b-c1 complex, complex III, CIII) and cytochrome c oxidase (complex IV, CIV), that cooperate to transfer electrons derived from NADH and succinate to molecular oxygen, creating an electrochemical gradient over the inner membrane that drives transmembrane transport and the ATP synthase. Cytochrome c oxidase is the component of the respiratory chain that catalyzes the reduction of oxygen to water. Electrons originating from reduced cytochrome c in the intermembrane space (IMS) are transferred via the dinuclear copper A center (CU(A)) of subunit 2 and heme A of subunit 1 to the active site in subunit 1, a binuclear center (BNC) formed by heme A3 and copper B (CU(B)). The BNC reduces molecular oxygen to 2 water molecules using 4 electrons from cytochrome c in the IMS and 4 protons from the mitochondrial matrix. This chain is Cytochrome c oxidase subunit 4 isoform 1, mitochondrial (COX4I1), found in Saimiri sciureus (Common squirrel monkey).